Reading from the N-terminus, the 237-residue chain is Ribonuclease 3 (237 aa).

An RNase III domain is found at Leu6–Gly133. Mg(2+) is bound at residue Glu46. Residue Asp50 is part of the active site. Mg(2+) is bound by residues Asp119 and Glu122. Residue Glu122 is part of the active site. Residues Asp160–Glu229 form the DRBM domain.

The protein belongs to the ribonuclease III family. In terms of assembly, homodimer. Mg(2+) serves as cofactor.

Its subcellular location is the cytoplasm. The catalysed reaction is Endonucleolytic cleavage to 5'-phosphomonoester.. In terms of biological role, digests double-stranded RNA. Involved in the processing of primary rRNA transcript to yield the immediate precursors to the large and small rRNAs (23S and 16S). Processes some mRNAs, and tRNAs when they are encoded in the rRNA operon. Processes pre-crRNA and tracrRNA of type II CRISPR loci if present in the organism. The sequence is that of Ribonuclease 3 from Clostridium perfringens (strain 13 / Type A).